Reading from the N-terminus, the 238-residue chain is Fatty acid metabolism regulator protein (238 aa).

An HTH gntR-type domain is found at 6-74 (KGPASFAEKY…HGKPTRVNNF (69 aa)). Positions 34 to 53 (ERELSELIGVTRTTLREVLQ) form a DNA-binding region, H-T-H motif.

Homodimer.

The protein resides in the cytoplasm. In terms of biological role, multifunctional regulator of fatty acid metabolism. This chain is Fatty acid metabolism regulator protein, found in Shewanella baltica (strain OS155 / ATCC BAA-1091).